Consider the following 419-residue polypeptide: Synaptotagmin-2 (419 aa).

The Vesicular portion of the chain corresponds to 1 to 62; sequence MRNIFKRNQE…NEINKIPLPP (62 aa). The disordered stretch occupies residues 16 to 39; that stretch reads ATTTATMPIGPVDNSTESGGAGES. The N-linked (GlcNAc...) asparagine glycan is linked to asparagine 29. Residues 63-83 traverse the membrane as a helical segment; that stretch reads WALIAIAVVAGLLLLTCCFCI. The Cytoplasmic portion of the chain corresponds to 84 to 419; it reads CKKCCCKKKK…EVDALLGKNK (336 aa). A disordered region spans residues 99–138; the sequence is GKGMKNAMNMKDMKGGQDDDDAETGLTEGEGEGEEEKEPE. A compositionally biased stretch (acidic residues) spans 116–136; the sequence is DDDDAETGLTEGEGEGEEEKE. Phosphothreonine occurs at positions 122 and 125. Positions 133–379 are phospholipid binding; that stretch reads EEKEPENLGK…AIGKIFVGSN (247 aa). C2 domains lie at 139–258 and 270–403; these read NLGK…EEWR and KLGD…AQWH. Ca(2+) is bound by residues leucine 169, aspartate 170, and aspartate 176. Threonine 199 is modified (phosphothreonine). Phosphotyrosine is present on tyrosine 227. 10 residues coordinate Ca(2+): aspartate 228, phenylalanine 229, aspartate 230, serine 233, lysine 234, aspartate 236, aspartate 301, aspartate 307, aspartate 361, and aspartate 363. At threonine 383 the chain carries Phosphothreonine.

Belongs to the synaptotagmin family. In terms of assembly, homotetramer. Heterodimer; heterodimerizes with SYT1 in presence of calcium. Interacts with STON2. Interacts with SCAMP5. Interacts with PRRT2. Ca(2+) is required as a cofactor. Phosphorylation at Thr-199 by WNK1, changes the calcium requirement for SYT2-binding to phospholipid membranes. In terms of tissue distribution, expressed at the neuromuscular junction. Expressed in melanocytes.

The protein resides in the cytoplasmic vesicle. It localises to the secretory vesicle. Its subcellular location is the synaptic vesicle membrane. It is found in the chromaffin granule membrane. The protein localises to the cytoplasm. In terms of biological role, exhibits calcium-dependent phospholipid and inositol polyphosphate binding properties. May have a regulatory role in the membrane interactions during trafficking of synaptic vesicles at the active zone of the synapse. Plays a role in dendrite formation by melanocytes. This Homo sapiens (Human) protein is Synaptotagmin-2.